The sequence spans 90 residues: Transcriptional repressor SdpR (90 aa).

Residues 1 to 87 (MNNVFKAISD…WMLNFINKGD (87 aa)) form the HTH arsR-type domain. Positions 39–62 (PSISHHLNILKQAEVISDHRKGQF) form a DNA-binding region, H-T-H motif.

The protein resides in the cytoplasm. In terms of biological role, represses the transcription of the sdpIR operon and of several other operons that probably contribute to delaying commitment to sporulation. This is Transcriptional repressor SdpR (sdpR) from Bacillus subtilis (strain 168).